Reading from the N-terminus, the 331-residue chain is Elongation factor Ts, mitochondrial (331 aa).

A mitochondrion-targeting transit peptide spans 1–14 (MIVSRQVIRSVVRK).

The protein belongs to the EF-Ts family.

It is found in the mitochondrion. Its function is as follows. Associates with the EF-Tu.GDP complex and induces the exchange of GDP to GTP. It remains bound to the aminoacyl-tRNA.EF-Tu.GTP complex up to the GTP hydrolysis stage on the ribosome. In Brugia malayi (Filarial nematode worm), this protein is Elongation factor Ts, mitochondrial.